A 132-amino-acid polypeptide reads, in one-letter code: Small ribosomal subunit protein uS8 (132 aa).

It belongs to the universal ribosomal protein uS8 family. Part of the 30S ribosomal subunit. Contacts proteins S5 and S12.

Functionally, one of the primary rRNA binding proteins, it binds directly to 16S rRNA central domain where it helps coordinate assembly of the platform of the 30S subunit. This Lactobacillus delbrueckii subsp. bulgaricus (strain ATCC BAA-365 / Lb-18) protein is Small ribosomal subunit protein uS8.